The chain runs to 131 residues: Histone H2A.2 (131 aa).

Residues 1 to 22 (MSGGKGKAGSSEKASTSRSAKA) form a disordered region. Ser-2 carries the post-translational modification N-acetylserine. Residues Lys-5 and Lys-7 each carry the N6-acetyllysine modification. Gln-105 is subject to N5-methylglutamine. Lys-126 is covalently cross-linked (Glycyl lysine isopeptide (Lys-Gly) (interchain with G-Cter in SUMO)). Ser-128 carries the phosphoserine modification. Residues 128–129 (SQ) carry the [ST]-Q motif motif.

Belongs to the histone H2A family. As to quaternary structure, the nucleosome is a histone octamer containing two molecules each of H2A, H2B, H3 and H4 assembled in one H3-H4 heterotetramer and two H2A-H2B heterodimers. The octamer wraps approximately 147 bp of DNA. Post-translationally, phosphorylated to form H2AS128ph (gamma-H2A) in response to DNA double-strand breaks (DSBs) generated by exogenous genotoxic agents and by stalled replication forks. Phosphorylation is dependent on the DNA damage checkpoint kinases MEC1/ATR and TEL1/ATM, spreads on either side of a detected DSB site and may mark the surrounding chromatin for recruitment of proteins required for DNA damage signaling and repair. Gamma-H2A is removed from the DNA prior to the strand invasion-primer extension step of the repair process and subsequently dephosphorylated. Dephosphorylation is necessary for efficient recovery from the DNA damage checkpoint. In terms of processing, acetylated by ESA1 to form H2AK4ac and H2AK7ac.

The protein localises to the nucleus. The protein resides in the chromosome. Its function is as follows. Core component of nucleosome which plays a central role in DNA double strand break (DSB) repair. Nucleosomes wrap and compact DNA into chromatin, limiting DNA accessibility to the cellular machineries which require DNA as a template. Histones thereby play a central role in transcription regulation, DNA repair, DNA replication and chromosomal stability. DNA accessibility is regulated via a complex set of post-translational modifications of histones, also called histone code, and nucleosome remodeling. The protein is Histone H2A.2 (HTA2) of Scheffersomyces stipitis (strain ATCC 58785 / CBS 6054 / NBRC 10063 / NRRL Y-11545) (Yeast).